The chain runs to 510 residues: Secreted RxLR effector protein 108 (510 aa).

Positions 1-20 are cleaved as a signal peptide; that stretch reads MRGAYYVLTALFVVTSSDIA. Asparagine 47 carries N-linked (GlcNAc...) asparagine glycosylation. A RxLR-dEER motif is present at residues 48–65; it reads RSLRGSRDGRNDLANEER. 2 disordered regions span residues 111 to 139 and 386 to 442; these read RAAK…AKKT and KRSR…DDPK. The segment covering 122 to 137 has biased composition (basic residues); sequence PAKAAKKTPRAAKAAK. Residues 393-405 show a composition bias toward polar residues; the sequence is DGNTDTASLPSKQ. Over residues 429-442 the composition is skewed to basic and acidic residues; that stretch reads VPTKEIKSSFDDPK.

This sequence belongs to the RxLR effector family.

The protein resides in the secreted. The protein localises to the host nucleus. Secreted effector that completely suppresses the host cell death induced by cell death-inducing proteins. The protein is Secreted RxLR effector protein 108 of Plasmopara viticola (Downy mildew of grapevine).